We begin with the raw amino-acid sequence, 1493 residues long: Mitogen-activated protein kinase kinase kinase 1 (1493 aa).

Composition is skewed to low complexity over residues 1–23 (MAAA…ASPE) and 33–42 (GSGAPAAGAG). Disordered stretches follow at residues 1 to 171 (MAAA…DRPE) and 222 to 295 (LQGE…EETS). A2 bears the N-acetylalanine mark. Phosphoserine is present on S21. A compositionally biased stretch (pro residues) spans 84–94 (PPCPSTSPSPE). Composition is skewed to low complexity over residues 95-108 (PADA…FQPA) and 135-151 (ARSP…APSG). S137 carries the phosphoserine modification. Basic and acidic residues predominate over residues 152-171 (REMENKETLKGLHKMDDRPE). Positions 230–257 (SAAPAPKGRRSPSPGSSPSGRSGKPESP) are enriched in low complexity. S265 carries the post-translational modification Phosphoserine. At T275 the chain carries Phosphothreonine. Phosphoserine occurs at positions 282, 287, and 290. The SWIM-type zinc-finger motif lies at 328-356 (YRVFIGPQNCSCGRGTFCIHLLFVMLRVF). The RING-type zinc finger occupies 433 to 482 (CPICLLGMLDEESLTVCEDGCRNKLHHHCMSIWAEECRRNREPLICPLCR). Over residues 496 to 506 (SSPVDSPTSLR) the composition is skewed to polar residues. Disordered stretches follow at residues 496 to 524 (SSPV…SQRR), 866 to 910 (DTLD…LSAS), 923 to 955 (VGLP…SPLS), and 992 to 1060 (PCKI…ASKN). Phosphoserine occurs at positions 497, 521, and 910. Over residues 507 to 522 (GVQQPSSPQQPVAGSQ) the composition is skewed to low complexity. Polar residues-rich tracts occupy residues 925–940 (LPSS…TVQT) and 998–1014 (ASPQ…QRTC). Phosphoserine is present on residues S999 and S1024. The span at 1049 to 1060 (GSTSKLGDASKN) shows a compositional bias: polar residues. The Protein kinase domain occupies 1224-1489 (WLKGQQIGLG…SRELLKHPVF (266 aa)). ATP is bound by residues 1230 to 1238 (IGLGAFSSC) and K1253. The active-site Proton acceptor is D1350. 2 positions are modified to phosphothreonine; by autocatalysis: T1381 and T1393.

Belongs to the protein kinase superfamily. STE Ser/Thr protein kinase family. MAP kinase kinase kinase subfamily. As to quaternary structure, binds both upstream activators and downstream substrates in multimolecular complexes through its N-terminus. Oligomerizes after binding MAP4K2 or TRAF2. Interacts (via the kinase catalytic domain) with STK38. Interacts with GRIPAP1. Requires Mg(2+) as cofactor. Post-translationally, autophosphorylated. In terms of tissue distribution, most highly expressed in spleen, kidney and lung.

Its subcellular location is the membrane. The catalysed reaction is L-seryl-[protein] + ATP = O-phospho-L-seryl-[protein] + ADP + H(+). The enzyme catalyses L-threonyl-[protein] + ATP = O-phospho-L-threonyl-[protein] + ADP + H(+). With respect to regulation, activated by autophosphorylation on Thr-1381 and Thr-1393 following oligomerization. Its function is as follows. Component of a protein kinase signal transduction cascade. Activates the ERK and JNK kinase pathways by phosphorylation of MAP2K1 and MAP2K4. May phosphorylate the MAPK8/JNK1 kinase. Activates CHUK and IKBKB, the central protein kinases of the NF-kappa-B pathway. The polypeptide is Mitogen-activated protein kinase kinase kinase 1 (Map3k1) (Rattus norvegicus (Rat)).